Here is a 229-residue protein sequence, read N- to C-terminus: MAEKKAEKRAEKRKFNTEAWEPKTQIGRMVKEGTISDINYIMDKGLPLLEPEIVDALLPDLEEQVLDVKLVQRMHKSGRRARYRATVVVGNKNGYVGVGMGKSKEVGPAIRKAIAHAKLSLIKVRIGCGSWECGCGYPHSIPFTAKGACGSVKVELLPAPRGVGLVAGNVAKAVLGLAGIKDAWTKTFGDTRTTYNFAEATFDALNNLNFVRCLPAQKEKLGLTEGRVL.

The S5 DRBM domain maps to 61–124; it reads LEEQVLDVKL…AHAKLSLIKV (64 aa).

This sequence belongs to the universal ribosomal protein uS5 family. Part of the 30S ribosomal subunit. Contacts protein S4.

Its function is as follows. With S4 and S12 plays an important role in translational accuracy. The sequence is that of Small ribosomal subunit protein uS5 from Methanococcus maripaludis (strain C7 / ATCC BAA-1331).